The primary structure comprises 523 residues: Peptidyl-prolyl cis-trans isomerase 4 (523 aa).

Residues 38 to 111 (KRLPINHCSL…GKFRCPVTFR (74 aa)) enclose the U-box domain. The region spanning 278–433 (KNAFVRLVTN…VSVVIMRAEV (156 aa)) is the PPIase cyclophilin-type domain.

This sequence belongs to the cyclophilin-type PPIase family. PPIL2 subfamily. In terms of assembly, interacts with mep-1. Exclusively in the larval body wall striated muscle cells.

Its subcellular location is the nucleus. It catalyses the reaction [protein]-peptidylproline (omega=180) = [protein]-peptidylproline (omega=0). It carries out the reaction S-ubiquitinyl-[E2 ubiquitin-conjugating enzyme]-L-cysteine + [acceptor protein]-L-lysine = [E2 ubiquitin-conjugating enzyme]-L-cysteine + N(6)-ubiquitinyl-[acceptor protein]-L-lysine.. It functions in the pathway protein modification; protein ubiquitination. Its function is as follows. May catalyze the cis-trans isomerization of proline imidic peptide bonds in oligopeptides thereby assisting the folding of proteins. May also function as a chaperone, playing a role in intracellular transport of proteins. May also have a protein ubiquitin ligase activity acting as an E3 ubiquitin protein ligase or as a ubiquitin-ubiquitin ligase promoting elongation of ubiquitin chains on proteins. Influences the hermaphrodite switch from spermatogenesis to oogenesis. Required for body wall muscle cell development. The protein is Peptidyl-prolyl cis-trans isomerase 4 (cyn-4) of Caenorhabditis elegans.